Reading from the N-terminus, the 137-residue chain is Large-conductance mechanosensitive channel (137 aa).

2 helical membrane passes run 15–35 (VDLAVGFILGGAFGTIVTSLV) and 81–101 (GKFINAVISFVIMALALFFVI).

It belongs to the MscL family. In terms of assembly, homopentamer.

Its subcellular location is the cell inner membrane. Its function is as follows. Channel that opens in response to stretch forces in the membrane lipid bilayer. May participate in the regulation of osmotic pressure changes within the cell. The polypeptide is Large-conductance mechanosensitive channel (Hyphomonas neptunium (strain ATCC 15444)).